Reading from the N-terminus, the 453-residue chain is Nuclear hormone receptor family member nhr-12 (453 aa).

The disordered stretch occupies residues 1–37; that stretch reads MEQIPQEQKTEPFLASFTTTEKLGTETPTTSITPNTQ. Residues 18–36 are compositionally biased toward low complexity; sequence TTTEKLGTETPTTSITPNT. The nuclear receptor DNA-binding region spans 44–119; it reads KPNCAVCNEV…VGMNPECVQN (76 aa). 2 NR C4-type zinc fingers span residues 47–67 and 83–107; these read CAVCNEVGDGLHFGAEACRAC and CRAGRNCEVSSNIRCMCRSCRYDKC. In terms of domain architecture, NR LBD spans 178-451; that stretch reads FSPASLPGLS…ENFVNIINGK (274 aa).

This sequence belongs to the nuclear hormone receptor family.

The protein resides in the nucleus. Functionally, orphan nuclear receptor. In Caenorhabditis elegans, this protein is Nuclear hormone receptor family member nhr-12 (nhr-12).